A 725-amino-acid chain; its full sequence is Protein ALEX (725 aa).

7 disordered regions span residues 1 to 93 (MSPS…ARAQ), 177 to 226 (GAIA…PLTD), 256 to 340 (EPPL…PSQP), 396 to 481 (PILT…SPLL), 508 to 528 (PMQVHWSGEPGHSQLLPPLGH), 584 to 624 (LPGL…AASS), and 638 to 675 (ATRSGATQSATSSPEPSEAASVYPSVPDHDPSAPGRPR). Residues 41-51 (HLRRKPCHSRH) are compositionally biased toward basic residues. Residues 260–276 (GSTTTPLSIWTAPQSQV) show a composition bias toward polar residues. Basic and acidic residues-rich tracts occupy residues 297-307 (QLSEKQPRWKE) and 314-326 (RWKEKSPLRREGT). Composition is skewed to pro residues over residues 423-442 (PSQPPRQSLPPRPSLPPGQP) and 459-473 (RSLPPGQPLSPPRSP). Composition is skewed to low complexity over residues 584-598 (LPGLTSTSGAEAAAG) and 643-658 (ATQSATSSPEPSEAAS).

Belongs to the ALEX family. In terms of assembly, interacts with the N-terminal region of the XLas isoforms of guanine nucleotide-binding protein G(s) subunit alpha.

Its subcellular location is the cell membrane. It is found in the cell projection. The protein localises to the ruffle. Functionally, may inhibit the adenylyl cyclase-stimulating activity of guanine nucleotide-binding protein G(s) subunit alpha which is produced from the same locus in a different open reading frame. The chain is Protein ALEX from Mus musculus (Mouse).